The primary structure comprises 86 residues: UPF0473 protein Clos_1662 (86 aa).

Belongs to the UPF0473 family.

The polypeptide is UPF0473 protein Clos_1662 (Alkaliphilus oremlandii (strain OhILAs) (Clostridium oremlandii (strain OhILAs))).